The sequence spans 70 residues: ATP synthase subunit c (70 aa).

2 consecutive transmembrane segments (helical) span residues 4–24 and 45–65; these read IAAA…NGLI and IMFI…VIAF.

The protein belongs to the ATPase C chain family. As to quaternary structure, F-type ATPases have 2 components, F(1) - the catalytic core - and F(0) - the membrane proton channel. F(1) has five subunits: alpha(3), beta(3), gamma(1), delta(1), epsilon(1). F(0) has three main subunits: a(1), b(2) and c(10-14). The alpha and beta chains form an alternating ring which encloses part of the gamma chain. F(1) is attached to F(0) by a central stalk formed by the gamma and epsilon chains, while a peripheral stalk is formed by the delta and b chains.

It is found in the cell membrane. Functionally, f(1)F(0) ATP synthase produces ATP from ADP in the presence of a proton or sodium gradient. F-type ATPases consist of two structural domains, F(1) containing the extramembraneous catalytic core and F(0) containing the membrane proton channel, linked together by a central stalk and a peripheral stalk. During catalysis, ATP synthesis in the catalytic domain of F(1) is coupled via a rotary mechanism of the central stalk subunits to proton translocation. In terms of biological role, key component of the F(0) channel; it plays a direct role in translocation across the membrane. A homomeric c-ring of between 10-14 subunits forms the central stalk rotor element with the F(1) delta and epsilon subunits. The sequence is that of ATP synthase subunit c from Staphylococcus haemolyticus (strain JCSC1435).